Consider the following 175-residue polypeptide: Adenylate kinase isoenzyme 6 homolog (175 aa).

5 residues coordinate ATP: glycine 18, glycine 20, lysine 21, threonine 22, and threonine 23. Positions 38-61 (CIGDVVKENHLHFGFDEKWKTYDV) are NMPbind. The segment at 113 to 123 (SRGYSLEKIQE) is LID. Arginine 114 is a binding site for ATP.

This sequence belongs to the adenylate kinase family. AK6 subfamily. In terms of assembly, interacts with small ribosomal subunit protein uS11. Not a structural component of 43S pre-ribosomes, but transiently interacts with them by binding to uS11.

The protein localises to the cytoplasm. It is found in the nucleus. The catalysed reaction is AMP + ATP = 2 ADP. It catalyses the reaction ATP + H2O = ADP + phosphate + H(+). In terms of biological role, broad-specificity nucleoside monophosphate (NMP) kinase that catalyzes the reversible transfer of the terminal phosphate group between nucleoside triphosphates and monophosphates. Also has ATPase activity. Involved in the late cytoplasmic maturation steps of the 40S ribosomal particles, specifically 18S rRNA maturation. While NMP activity is not required for ribosome maturation, ATPase activity is. Associates transiently with small ribosomal subunit protein uS11. ATP hydrolysis breaks the interaction with uS11. May temporarily remove uS11 from the ribosome to enable a conformational change of the ribosomal RNA that is needed for the final maturation step of the small ribosomal subunit. Its NMP activity may have a role in nuclear energy homeostasis. The protein is Adenylate kinase isoenzyme 6 homolog (fap7) of Schizosaccharomyces pombe (strain 972 / ATCC 24843) (Fission yeast).